The primary structure comprises 210 residues: CLAVATA3/ESR (CLE)-related protein 4A-3 (210 aa).

An N-terminal signal peptide occupies residues 1-21 (MAKNAMLCLLILRVVLALAFA). The segment at 21–83 (ATNKKGDEEP…SNQLPNNNWM (63 aa)) is required for secretion from the host cytoplasm to the host apoplasm. Asparagine 32 carries an N-linked (GlcNAc...) asparagine glycan. Residues 116–210 (RKTGMHSQRH…APAGPDPIHH (95 aa)) form a disordered region. Basic and acidic residues-rich tracts occupy residues 125 to 137 (HHEETTLEQEKRV) and 144 to 200 (PIHH…EKRG). The stretch at 127–135 (EETTLEQEK) is one A-1 repeat. The tract at residues 127–198 (EETTLEQEKR…HEDTTLEQEK (72 aa)) is 4 X approximate repeat A. Residues 136–147 (RVAGAGPDPIHH) form a CLE-1 repeat. Positions 136–210 (RVAGAGPDPI…APAGPDPIHH (75 aa)) are 4 X approximate repeat CLE. The stretch at 148-156 (QDTTLEQEK) is one A-2 repeat. One copy of the CLE-2 repeat lies at 157–168 (RAVPAGPDPKHH). The stretch at 169-177 (EETTLEQEK) is one A-3 repeat. The stretch at 178 to 189 (RAVPAGPDPKHH) is one CLE-3 repeat. The stretch at 190-198 (EDTTLEQEK) is one A-4 repeat. One copy of the CLE-4 repeat lies at 199–210 (RGAPAGPDPIHH).

This sequence belongs to the CLV3/ESR signal peptide family. As to expression, highly expressed exclusively within the dorsal esophageal gland cell during syncytium formation in host plants.

The protein resides in the secreted. The protein localises to the host cytoplasm. It is found in the host extracellular space. It localises to the extracellular space. Its subcellular location is the apoplast. Mimics host plant CLE extracellular signal peptides that regulate cell fate. May play a role in the differentiation or division of feeding cells (syncytia) induced in plant roots during infection. The polypeptide is CLAVATA3/ESR (CLE)-related protein 4A-3 (CLE-4A-3) (Globodera rostochiensis (Golden nematode worm)).